Consider the following 462-residue polypeptide: Cysteine--tRNA ligase (462 aa).

Zn(2+) is bound at residue cysteine 30. Residues 32 to 42 carry the 'HIGH' region motif; sequence MTVYDYCHVGH. Cysteine 214, histidine 239, and glutamate 243 together coordinate Zn(2+). Positions 271 to 275 match the 'KMSKS' region motif; it reads KMSKS. Position 274 (lysine 274) interacts with ATP.

This sequence belongs to the class-I aminoacyl-tRNA synthetase family. As to quaternary structure, monomer. Requires Zn(2+) as cofactor.

It localises to the cytoplasm. The enzyme catalyses tRNA(Cys) + L-cysteine + ATP = L-cysteinyl-tRNA(Cys) + AMP + diphosphate. This chain is Cysteine--tRNA ligase, found in Cupriavidus taiwanensis (strain DSM 17343 / BCRC 17206 / CCUG 44338 / CIP 107171 / LMG 19424 / R1) (Ralstonia taiwanensis (strain LMG 19424)).